A 505-amino-acid chain; its full sequence is Protein disulfide-isomerase A3 (505 aa).

The signal sequence occupies residues 1 to 24; the sequence is MRLRRLALFPGVALLLAAARLAAA. A Thioredoxin 1 domain is found at 25 to 133; that stretch reads SDVLELTDDN…IVSHLKKQAG (109 aa). Residues cysteine 57 and cysteine 60 each act as nucleophile in the active site. An intrachain disulfide couples cysteine 57 to cysteine 60. Residue lysine 61 is modified to N6-methyllysine. Cysteine 85 and cysteine 92 are oxidised to a cystine. N6-succinyllysine is present on lysine 129. N6-acetyllysine is present on lysine 152. At lysine 218 the chain carries N6-succinyllysine. Lysine 252 bears the N6-acetyllysine mark. Threonine 319 carries the post-translational modification Phosphothreonine. The 143-residue stretch at 343 to 485 folds into the Thioredoxin 2 domain; that stretch reads SRDGKALERF…FISYLQREAT (143 aa). Lysine 362 carries the post-translational modification N6-acetyllysine. Catalysis depends on nucleophile residues cysteine 406 and cysteine 409. Cysteine 406 and cysteine 409 are disulfide-bonded. Positions 484 to 505 are disordered; sequence ATNPPVIQEEKPKKKKKAQEDL. A compositionally biased stretch (basic and acidic residues) spans 491–505; the sequence is QEEKPKKKKKAQEDL. Residue lysine 494 is modified to N6-acetyllysine. Positions 502-505 match the Prevents secretion from ER motif; it reads QEDL.

As to quaternary structure, part of the major histocompatibility complex class I (MHC I) peptide loading complex composed of TAP1, TAP2, B2M, MHC heavy chain, TAPBP, PDIA3, and CALR. Interacts with ERP27 and CANX. Interacts with SERPINA2 and with the S and Z variants of SERPINA1. Interacts with ATP2A2. In terms of processing, within the major histocompatibility complex class I (MHC I) peptide loading complex forms reversible disulfide-linked heterodimers with TAPBP as part of its protein folding chaperone activity. This is essential to assist the dynamic assembly of the MHC I complex with high affinity antigens in the endoplasmic reticulum. Phosphorylated. In terms of tissue distribution, detected in the flagellum and head region of spermatozoa (at protein level). Expressed in liver, stomach and colon (at protein level). Expressed in gastric parietal cells and chief cells (at protein level).

It is found in the endoplasmic reticulum. It localises to the endoplasmic reticulum lumen. The protein localises to the melanosome. It carries out the reaction Catalyzes the rearrangement of -S-S- bonds in proteins.. With respect to regulation, association with calcitriol does not affect its enzymatic activity. Protein disulfide isomerase that catalyzes the formation, isomerization, and reduction or oxidation of disulfide bonds in client proteins and functions as a protein folding chaperone. Core component of the major histocompatibility complex class I (MHC I) peptide loading complex where it functions as an essential folding chaperone for TAPBP. Through TAPBP, assists the dynamic assembly of the MHC I complex with high affinity antigens in the endoplasmic reticulum. Therefore, plays a crucial role in the presentation of antigens to cytotoxic T cells in adaptive immunity. This is Protein disulfide-isomerase A3 from Homo sapiens (Human).